A 407-amino-acid polypeptide reads, in one-letter code: L-cysteine:1D-myo-inositol 2-amino-2-deoxy-alpha-D-glucopyranoside ligase (407 aa).

A Zn(2+)-binding site is contributed by C43. Residues 43-46, T58, and 81-83 contribute to the L-cysteinyl-5'-AMP site; these read CGIT and NAT. Residues 45–55 carry the 'HIGH' region motif; that stretch reads ITPYDATHLGH. The short motif at 183-188 is the 'ERGGDP' region element; that stretch reads QRGGDP. W223 provides a ligand contact to L-cysteinyl-5'-AMP. Position 227 (C227) interacts with Zn(2+). 245–247 is a binding site for L-cysteinyl-5'-AMP; sequence GSD. Residue H252 coordinates Zn(2+). Residue V279 coordinates L-cysteinyl-5'-AMP. Residues 285–289 carry the 'KMSKS' region motif; the sequence is KMSKS.

The protein belongs to the class-I aminoacyl-tRNA synthetase family. MshC subfamily. Monomer. Zn(2+) serves as cofactor.

The catalysed reaction is 1D-myo-inositol 2-amino-2-deoxy-alpha-D-glucopyranoside + L-cysteine + ATP = 1D-myo-inositol 2-(L-cysteinylamino)-2-deoxy-alpha-D-glucopyranoside + AMP + diphosphate + H(+). In terms of biological role, catalyzes the ATP-dependent condensation of GlcN-Ins and L-cysteine to form L-Cys-GlcN-Ins. In Streptosporangium roseum (strain ATCC 12428 / DSM 43021 / JCM 3005 / KCTC 9067 / NCIMB 10171 / NRRL 2505 / NI 9100), this protein is L-cysteine:1D-myo-inositol 2-amino-2-deoxy-alpha-D-glucopyranoside ligase.